We begin with the raw amino-acid sequence, 1213 residues long: MLNGHVVNYGKHRTRRSFSRIKEVLKLPNLTDVQTESYKWFLDKGIKEVFDDIMPISDFSGKLSLEYVGYKLQKPKYTVDEARDHDATYAAPMHVTLKLTNQETGEIKTQDVFFGDLPLMTESGSFIVNGAERVIVSQLVRSPGVYYTGDYDKNGRQIFGTTVIPNRGAWLEYETDAKNVSYVRVDRTRKLPLTVLIRAMGIGSDSEIIEMFGQSDTLQFTLDKDVHKNPADSRVAEALKDIYERLRPGEPKTTDSSRSLLYARFFDPRRYDLAPVGRYKINKKLSLKNRLYGQTLAETLADPDTGEIIVKKDTVVTHEIMDKLAPYLDRDDFKMVTYQPSKEGVLPDPITVQEIKVYSKVDPEREVKLMSNGHIDADVKHLTPADVLASINYFFALQDKIGTTDDIDHLGNRRIRRVGELLQNQFRIGLARMERVVRERMSIQDPSTVTPQQLINIRPIVASIKEFFGSSQLSQFMDQHNPLGELTHKRRMSALGPGGLTRDRAGYEVRDVHYTHYGRLCPIETPEGPNIGLINSLASYAIINKYGFIETPYRRVSWDTHKVTDKIDYLTADEEDNYIIAGANTPLNDDGSFKEDIILARQKEDNVEVTPDKIDYMDVIPKQVVSVASACIPFLENDDSNRALMGANQQRQAAPLINPHSSLVGTGMEYRAAHDSGAALIAKAAGTVEYVDADEIRIRREDGTLDKYTLEKYRRSNNSKSYNQTPNVKLGDHVDESDVIANGPTMDHGELALGQNPLIAFMTWNMYNYEDAIMLSERLVKDDVYTSISIEDYESEARDTKLGPEEITRELPNIGEDALKDLDADGIVRVGAEVHDGDILVGKVTPKGVTELSAEERLLHAIFGEKAREVRDTSLRVPHGGGGIVQDVKVYTREAGDELSPGVNTMVRVYIAQKRKIQVGDKMSGRHGNKGTVAAVMPEEDMPYLPDGTPVDICLNPMGVPSRMNIGQLLELHLGAAARQLGIHVATPVFDGANENDVWDTVRQAGMDKDGKTVIYDGRTGEPFHNRVSVGVMHYLKLTHMVDDKIHARSIGPYSLVTQQPLGGKAQFGGQRFGEMEVWALEAYGAAYTLQEILTYKSDDVVGRVKAYEAIVKGERIPKPGVPESFRVLVKELQSLGLDIRVLDMDHNEIELRDMDEDSSEHLNIDTLSRMAEEQEKKKLAEETGKSENKEDSNETADKPVAPADESDGKVSK.

A disordered region spans residues 1153–1213; it reads RDMDEDSSEH…ADESDGKVSK (61 aa). Positions 1171 to 1198 are enriched in basic and acidic residues; the sequence is MAEEQEKKKLAEETGKSENKEDSNETAD.

Belongs to the RNA polymerase beta chain family. As to quaternary structure, the RNAP catalytic core consists of 2 alpha, 1 beta, 1 beta' and 1 omega subunit. When a sigma factor is associated with the core the holoenzyme is formed, which can initiate transcription.

The enzyme catalyses RNA(n) + a ribonucleoside 5'-triphosphate = RNA(n+1) + diphosphate. In terms of biological role, DNA-dependent RNA polymerase catalyzes the transcription of DNA into RNA using the four ribonucleoside triphosphates as substrates. This chain is DNA-directed RNA polymerase subunit beta, found in Lactobacillus acidophilus (strain ATCC 700396 / NCK56 / N2 / NCFM).